The sequence spans 415 residues: Homoserine O-acetyltransferase (415 aa).

The 323-residue stretch at 47-369 (NAVLVCHGLT…HGHDAFLVEP (323 aa)) folds into the AB hydrolase-1 domain. Catalysis depends on Ser155, which acts as the Nucleophile. Residue Arg226 coordinates substrate. Active-site residues include Asp329 and His362. Position 363 (Asp363) interacts with substrate. Residues 383 to 415 (GVAGRAVTDTAPDGGEPDEDEDFAPVHSSLFSR) form a disordered region.

It belongs to the AB hydrolase superfamily. MetX family. Homodimer.

The protein localises to the cytoplasm. The catalysed reaction is L-homoserine + acetyl-CoA = O-acetyl-L-homoserine + CoA. It functions in the pathway amino-acid biosynthesis; L-methionine biosynthesis via de novo pathway; O-acetyl-L-homoserine from L-homoserine: step 1/1. Its function is as follows. Transfers an acetyl group from acetyl-CoA to L-homoserine, forming acetyl-L-homoserine. In Haloferax volcanii (strain ATCC 29605 / DSM 3757 / JCM 8879 / NBRC 14742 / NCIMB 2012 / VKM B-1768 / DS2) (Halobacterium volcanii), this protein is Homoserine O-acetyltransferase.